Consider the following 105-residue polypeptide: Thiosulfate sulfurtransferase GlpE (105 aa).

Residues 15–103 (MQQGAILVDI…WCRAELPIDT (89 aa)) form the Rhodanese domain. The active-site Cysteine persulfide intermediate is C63.

The protein belongs to the GlpE family.

The protein resides in the cytoplasm. It carries out the reaction thiosulfate + hydrogen cyanide = thiocyanate + sulfite + 2 H(+). The enzyme catalyses thiosulfate + [thioredoxin]-dithiol = [thioredoxin]-disulfide + hydrogen sulfide + sulfite + 2 H(+). Transferase that catalyzes the transfer of sulfur from thiosulfate to thiophilic acceptors such as cyanide or dithiols. May function in a CysM-independent thiosulfate assimilation pathway by catalyzing the conversion of thiosulfate to sulfite, which can then be used for L-cysteine biosynthesis. This chain is Thiosulfate sulfurtransferase GlpE, found in Haemophilus influenzae (strain PittEE).